We begin with the raw amino-acid sequence, 310 residues long: Serine/threonine-protein kinase pim-2 (310 aa).

One can recognise a Protein kinase domain in the interval 30 to 290 (YTMGNLLGSG…LEQILQHPWM (261 aa)). Residues 36–44 (LGSGGFGSV) and lysine 59 each bind ATP. Aspartate 167 serves as the catalytic Proton acceptor.

Belongs to the protein kinase superfamily. CAMK Ser/Thr protein kinase family. PIM subfamily. Post-translationally, autophosphorylated.

The enzyme catalyses L-seryl-[protein] + ATP = O-phospho-L-seryl-[protein] + ADP + H(+). The catalysed reaction is L-threonyl-[protein] + ATP = O-phospho-L-threonyl-[protein] + ADP + H(+). In terms of biological role, proto-oncogene with serine/threonine kinase activity involved in cell survival and cell proliferation. The chain is Serine/threonine-protein kinase pim-2 (pim2) from Danio rerio (Zebrafish).